Reading from the N-terminus, the 313-residue chain is MHTPVVFIDGDQGTTGLQIHARLQGRSDLRLLTLPEAERKDPQRRCEAINSADIALLCLPDDAAREAVAAIHNPQVRVIDASSAHRTTPGWVYGLPELDEQQAERIAQSTRVSNPGCYPTGAIALLHPLVKAGLLPADYPLNIHAVSGYSGGGRAAVERHEQPGAAKAPALQLYGLELAHKHVPEIQQHAGLSARPMFMPGYGAYRQGIALSIPLQLRLLPGQVSAEHLQACLEQHYQGARHVQVMPLHQCGAAANLDPEALNGSNDLRLALYANPEHGQVLLTAVFDNLGKGASGAAVQNLDLMLGALQAHG.

Residue C117 is part of the active site.

It belongs to the NAGSA dehydrogenase family. Type 2 subfamily.

It is found in the cytoplasm. It catalyses the reaction N-acetyl-L-glutamate 5-semialdehyde + phosphate + NADP(+) = N-acetyl-L-glutamyl 5-phosphate + NADPH + H(+). The protein operates within amino-acid biosynthesis; L-arginine biosynthesis; N(2)-acetyl-L-ornithine from L-glutamate: step 3/4. Functionally, catalyzes the NADPH-dependent reduction of N-acetyl-5-glutamyl phosphate to yield N-acetyl-L-glutamate 5-semialdehyde. The chain is N-acetyl-gamma-glutamyl-phosphate reductase 2 from Pseudomonas putida (strain ATCC 47054 / DSM 6125 / CFBP 8728 / NCIMB 11950 / KT2440).